The following is a 145-amino-acid chain: Large ribosomal subunit protein uL24 (145 aa).

Disordered regions lie at residues 1–21 and 122–145; these read MKFNPFVTSDRSKNRKRHFNA and KAKSRQVGKEKGKYKEETIEKMQE. A Glycyl lysine isopeptide (Lys-Gly) (interchain with G-Cter in SUMO2) cross-link involves residue Lys136. Position 139 is a phosphothreonine (Thr139).

Belongs to the universal ribosomal protein uL24 family. In terms of assembly, component of the large ribosomal subunit. Interacts with DHX33. In terms of processing, ufmylated by UFL1 in response to endoplasmic reticulum stress, promoting reticulophagy of endoplasmic reticulum sheets.

It is found in the cytoplasm. In terms of biological role, component of the large ribosomal subunit. The ribosome is a large ribonucleoprotein complex responsible for the synthesis of proteins in the cell. The polypeptide is Large ribosomal subunit protein uL24 (Rpl26) (Rattus norvegicus (Rat)).